Here is an 830-residue protein sequence, read N- to C-terminus: Heavy metal tolerance protein (830 aa).

The first 27 residues, 1 to 27, serve as a signal peptide directing secretion; that stretch reads MVLRYNSPRLNILELVLLYVGFFSIGS. The next 3 membrane-spanning stretches (helical) occupy residues 51–71, 88–108, and 126–146; these read PIGI…VDIS, TTVV…ISCA, and LSVL…IVYS. Asn150 carries an N-linked (GlcNAc...) asparagine glycan. 3 helical membrane-spanning segments follow: residues 156–176, 263–283, and 304–324; these read IVLA…AIYL, FQIF…ILAP, and DVIL…IGSL. Positions 265-550 constitute an ABC transmembrane type-1 domain; sequence IFICIVLLFL…FGTLYRSLQN (286 aa). Asn350 is a glycosylation site (N-linked (GlcNAc...) asparagine). Transmembrane regions (helical) follow at residues 381 to 401 and 403 to 423; these read VVFQ…YFFI and FDIY…YVTV. Residues 429–433, 492–495, and Gly542 contribute to the glutathione site; these read RTEAR and NIVQ. The chain crosses the membrane as a helical span at residues 490–511; sequence FLNIVQGGIFTFSLAIACLLSA. The ABC transporter domain maps to 584 to 818; it reads VIFSHVSFAY…DGGAYKKMWF (235 aa). ATP-binding positions include Tyr593 and 617-628; that span reads GESGGGKSTIMR.

The protein belongs to the ABC transporter superfamily. ABCB family. Heavy Metal importer (TC 3.A.1.210) subfamily.

It is found in the vacuole membrane. Involved in metal tolerance. Probably involved in the transport of metal-bound phytochelatins. Compartmentalizes cadmium within vacuoles, thereby protecting cells from cadmium toxicity. The protein is Heavy metal tolerance protein (hmt1) of Schizosaccharomyces pombe (strain 972 / ATCC 24843) (Fission yeast).